The chain runs to 184 residues: Ras protein let-60 (184 aa).

10-17 (GDGGVGKS) contributes to the GTP binding site. An Effector region motif is present at residues 32–40 (YDPTIEDSY). Residues 57 to 61 (DTAGQ) and 116 to 119 (NKCD) each bind GTP. The residue at position 181 (Cys-181) is a Cysteine methyl ester. Residue Cys-181 is the site of S-farnesyl cysteine attachment. A propeptide spans 182 to 184 (QIM) (removed in mature form).

The protein belongs to the small GTPase superfamily. Ras family. In terms of assembly, interacts with soc-2. Interacts (in GTP-bound form) with plc-1 (via Ras-associating domain 1). Expressed in body wall muscles and in the nervous system including ganglion, nerve ring dorsal and ventral nerve cords, motor neurons and sensory tail neurons.

It is found in the cell membrane. The enzyme catalyses GTP + H2O = GDP + phosphate + H(+). Functionally, GTP-binding protein with GTPase activity. The level of let-60 controls the switch between vulval and hypodermal cell fates during C.elegans vulval induction. May stimulate the guanine nucleotide exchange factor (GEF) activity of rap-1. May induce nuclear condensation. In Caenorhabditis elegans, this protein is Ras protein let-60.